A 219-amino-acid polypeptide reads, in one-letter code: GPI-anchored hemophore PGA7 (219 aa).

The first 13 residues, 1 to 13 (MHFIFYLILLVSA), serve as a signal peptide directing secretion. Residues 17–126 (GNFGTYPKVP…SMLSTAAGDA (110 aa)) form the CFEM domain. 4 disulfides stabilise this stretch: Cys45/Cys85, Cys49/Cys80, Cys59/Cys66, and Cys68/Cys101. Asp63 contributes to the heme binding site. Residues 151-194 (VVSETGSASETGSSESAQSTTTGSSSTGSSSTDSSSSSSSSPSS) are disordered. The span at 153 to 194 (SETGSASETGSSESAQSTTTGSSSTGSSSTDSSSSSSSSPSS) shows a compositional bias: low complexity. Ser194 carries the GPI-anchor amidated serine lipid modification. Residues 195–219 (SANFAVLQTGGIGSVILGFMMYLLV) constitute a propeptide, removed in mature form.

It belongs to the RBT5 family. Interacts with RBT5. Post-translationally, the GPI-anchor is attached to the protein in the endoplasmic reticulum and serves to target the protein to the cell surface. There, the glucosamine-inositol phospholipid moiety is cleaved off and the GPI-modified mannoprotein is covalently attached via its lipidless GPI glycan remnant to the 1,6-beta-glucan of the outer cell wall layer.

Its subcellular location is the secreted. The protein localises to the cell wall. It localises to the cell membrane. GPI-linked hyphal surface heme-binding protein involved in heme-iron utilization. Heme transfer occurs between PGA7, RBT5 and CSA2 supporting a model in which the 3 CFEM proteins cooperate in a heme-acquisition system and form a cross-cell wall heme-transfer cascade. The ability to acquire iron from host tissues is a major virulence factor of pathogenic microorganisms. Required for biofilm formation. The chain is GPI-anchored hemophore PGA7 from Candida albicans (strain SC5314 / ATCC MYA-2876) (Yeast).